Here is a 365-residue protein sequence, read N- to C-terminus: Phosphoserine aminotransferase (365 aa).

Residue R42 coordinates L-glutamate. Pyridoxal 5'-phosphate-binding positions include 76 to 77 (AR), W103, T154, D175, and Q198. The residue at position 199 (K199) is an N6-(pyridoxal phosphate)lysine. 242–243 (NT) serves as a coordination point for pyridoxal 5'-phosphate.

The protein belongs to the class-V pyridoxal-phosphate-dependent aminotransferase family. SerC subfamily. As to quaternary structure, homodimer. Pyridoxal 5'-phosphate is required as a cofactor.

Its subcellular location is the cytoplasm. It carries out the reaction O-phospho-L-serine + 2-oxoglutarate = 3-phosphooxypyruvate + L-glutamate. It catalyses the reaction 4-(phosphooxy)-L-threonine + 2-oxoglutarate = (R)-3-hydroxy-2-oxo-4-phosphooxybutanoate + L-glutamate. The protein operates within amino-acid biosynthesis; L-serine biosynthesis; L-serine from 3-phospho-D-glycerate: step 2/3. It functions in the pathway cofactor biosynthesis; pyridoxine 5'-phosphate biosynthesis; pyridoxine 5'-phosphate from D-erythrose 4-phosphate: step 3/5. Functionally, catalyzes the reversible conversion of 3-phosphohydroxypyruvate to phosphoserine and of 3-hydroxy-2-oxo-4-phosphonooxybutanoate to phosphohydroxythreonine. The chain is Phosphoserine aminotransferase from Blochmanniella floridana.